We begin with the raw amino-acid sequence, 716 residues long: FLYWCH-type zinc finger-containing protein 1 (716 aa).

The segment at 1-35 (MPLPEPSEQEGESVKAGQEPSPKPGTDVIPAAPRK) is disordered. Ser21 is subject to Phosphoserine. Residues 116–174 (FLRTPFGGRLLVLESFLYKQEKAVGDKVYWKCRQHAELGCRGRAITRGLRATVMRGHCH) form an FLYWCH-type 1 zinc finger. Residue Lys134 forms a Glycyl lysine isopeptide (Lys-Gly) (interchain with G-Cter in SUMO2) linkage. Residues 191–231 (PSLALPEGLGEPQGPEGPGGRVEEPLEGVGPWQCPEEPEPT) are disordered. A compositionally biased stretch (low complexity) spans 195-204 (LPEGLGEPQG). Residue Ser261 is modified to Phosphoserine. An FLYWCH-type 2 zinc finger spans residues 273-331 (FLRTCYGGSFLVHESFLYKREKAVGDKVYWTCRDHALHGCRSRAITQGQRVTVMRGHCH). Phosphoserine is present on Ser371. The tract at residues 377–421 (GPGPLTLTRPRPRKRAKVEDQELPTQPEAPDEHQDMDADPGGPEF) is disordered. Lys393 is covalently cross-linked (Glycyl lysine isopeptide (Lys-Gly) (interchain with G-Cter in SUMO2)). An FLYWCH-type 3 zinc finger spans residues 421 to 479 (FLKTPLGGSFLVYESFLYRREKAAGEKVYWTCRDQARMGCRSRAITQGRRVTVMRGHCH). At Ser503 the chain carries Phosphoserine. Residues 509–567 (FLKTPLGGSFLVYESFLYRREKAAGEKVYWTCRDQARMGCRSRAITQGRRVMVMRRHCH) form an FLYWCH-type 4 zinc finger. A Phosphoserine modification is found at Ser591. The segment at 600–658 (FLRTSLGGRFLVHESFLYRKEKAAGEKVYWMCRDQARLGCRSRAITQGHRIMVMRSHCH) adopts an FLYWCH-type 5 zinc-finger fold. Residue Lys685 forms a Glycyl lysine isopeptide (Lys-Gly) (interchain with G-Cter in SUMO2) linkage. The residue at position 696 (Ser696) is a Phosphoserine.

As to quaternary structure, interacts with CTNNB1 (when unphosphorylated), perhaps preventing interaction of CTNNB1 with TCF4, and thereby regulating transcription activation; phosphorylation of CTNNB1 may inhibit the interaction.

The protein localises to the nucleus. Its subcellular location is the chromosome. It localises to the centromere. Its function is as follows. Transcription cofactor. Negatively regulates transcription activation by catenin beta-1 CTNNB1, perhaps acting by competing with TCF4 for CTNNB1 binding. May play a role in DNA-damage response signaling. Binds specifically to DNA sequences at peri-centromeric chromatin loci. This Homo sapiens (Human) protein is FLYWCH-type zinc finger-containing protein 1 (FLYWCH1).